A 591-amino-acid chain; its full sequence is Aspartate--tRNA ligase (591 aa).

Residue glutamate 171 coordinates L-aspartate. An aspartate region spans residues 195–198; it reads QLFK. Position 217 (arginine 217) interacts with L-aspartate. ATP contacts are provided by residues 217-219 and glutamine 226; that span reads RDE. Histidine 448 provides a ligand contact to L-aspartate. Glutamate 482 is an ATP binding site. Arginine 489 contributes to the L-aspartate binding site. 534 to 537 provides a ligand contact to ATP; it reads GLDR.

Belongs to the class-II aminoacyl-tRNA synthetase family. Type 1 subfamily. In terms of assembly, homodimer.

It localises to the cytoplasm. It catalyses the reaction tRNA(Asp) + L-aspartate + ATP = L-aspartyl-tRNA(Asp) + AMP + diphosphate. Catalyzes the attachment of L-aspartate to tRNA(Asp) in a two-step reaction: L-aspartate is first activated by ATP to form Asp-AMP and then transferred to the acceptor end of tRNA(Asp). In Vibrio cholerae serotype O1 (strain ATCC 39541 / Classical Ogawa 395 / O395), this protein is Aspartate--tRNA ligase.